A 193-amino-acid chain; its full sequence is Xanthine phosphoribosyltransferase (193 aa).

Xanthine-binding residues include Leu20 and Thr27. 5-phospho-alpha-D-ribose 1-diphosphate is bound at residue 128 to 132; the sequence is ANGQA. Residue Lys156 coordinates xanthine.

It belongs to the purine/pyrimidine phosphoribosyltransferase family. Xpt subfamily. As to quaternary structure, homodimer.

The protein localises to the cytoplasm. The enzyme catalyses XMP + diphosphate = xanthine + 5-phospho-alpha-D-ribose 1-diphosphate. Its pathway is purine metabolism; XMP biosynthesis via salvage pathway; XMP from xanthine: step 1/1. Functionally, converts the preformed base xanthine, a product of nucleic acid breakdown, to xanthosine 5'-monophosphate (XMP), so it can be reused for RNA or DNA synthesis. This Streptococcus gordonii (strain Challis / ATCC 35105 / BCRC 15272 / CH1 / DL1 / V288) protein is Xanthine phosphoribosyltransferase.